The sequence spans 152 residues: Transcriptional repressor NrdR (152 aa).

A zinc finger spans residues 3 to 34 (CPFCNAADSKVIDSRLAAEGCQIRRRRECVSC). The ATP-cone domain maps to 49 to 139 (PRVIKSNGKN…VYQDFQDVEA (91 aa)).

Belongs to the NrdR family. Zn(2+) is required as a cofactor.

In terms of biological role, negatively regulates transcription of bacterial ribonucleotide reductase nrd genes and operons by binding to NrdR-boxes. The protein is Transcriptional repressor NrdR of Acinetobacter baumannii (strain AB0057).